The primary structure comprises 583 residues: Extracellular serine/threonine protein kinase four-jointed (583 aa).

At 1–78 (MYDIKRLEAG…RRRSLQRRAC (78 aa)) the chain is on the cytoplasmic side. A helical; Signal-anchor for type II membrane protein transmembrane segment spans residues 79 to 99 (LLSILAAFVFGMALGVVVPMF). Residues 100–583 (GLPRHQDSPP…LGQVQKCQGS (484 aa)) are Extracellular-facing. The interval 179–222 (RTASGRYRKGPERRLSKKMPERVQPQETSRSPTTSPTNPTSEHQ) is disordered. A compositionally biased stretch (basic and acidic residues) spans 187–199 (KGPERRLSKKMPE). Positions 206-219 (TSRSPTTSPTNPTS) are enriched in low complexity. Asn-310 and Asn-379 each carry an N-linked (GlcNAc...) asparagine glycan. Residues 384-421 (MQSERQAQSQPHGLLKRLGAASSPGSAHQSNAIEETGT) form a disordered region. Asn-491 is a glycosylation site (N-linked (GlcNAc...) asparagine).

This sequence belongs to the FJX1/FJ family. In terms of processing, proteolytically cleaved to yield a secreted protein. In the eye disk, expressed in a gradient ahead of the morphogenetic furrow, high at the equator and low at the poles of the eye. In the leg disk, expressed in concentric rings, possibly corresponding to segmental boundaries. In the wing disk, expression is localized in the wing pouch; low in peripheral regions and high towards the center.

It localises to the golgi apparatus membrane. Its subcellular location is the secreted. It carries out the reaction L-seryl-[protein] + ATP = O-phospho-L-seryl-[protein] + ADP + H(+). It catalyses the reaction L-threonyl-[protein] + ATP = O-phospho-L-threonyl-[protein] + ADP + H(+). Golgi serine/threonine protein kinase required for intermediate growth in the proximal-distal axis. Phosphorylates specific residues within extracellular cadherin domains of Fat (ft) and Dachsous (ds) as they transit through the Golgi. Acts in ommatidial polarity determination as a secondary signal downstream of Notch, JAK/STAT and wingless. Also necessary for the initiation, up-regulation or maintenance of Notch ligand, Serrate (Ser) expression in legs, thereby participating in a feedback loop with N signaling. Sufficient for joint formation and growth in the leg. This Drosophila melanogaster (Fruit fly) protein is Extracellular serine/threonine protein kinase four-jointed.